We begin with the raw amino-acid sequence, 308 residues long: tRNA dimethylallyltransferase (308 aa).

Position 17–24 (17–24 (GPTGSGKS)) interacts with ATP. 19–24 (TGSGKS) serves as a coordination point for substrate.

It belongs to the IPP transferase family. As to quaternary structure, monomer. Requires Mg(2+) as cofactor.

It catalyses the reaction adenosine(37) in tRNA + dimethylallyl diphosphate = N(6)-dimethylallyladenosine(37) in tRNA + diphosphate. Catalyzes the transfer of a dimethylallyl group onto the adenine at position 37 in tRNAs that read codons beginning with uridine, leading to the formation of N6-(dimethylallyl)adenosine (i(6)A). The chain is tRNA dimethylallyltransferase from Paenarthrobacter aurescens (strain TC1).